Reading from the N-terminus, the 396-residue chain is 1-deoxy-D-xylulose 5-phosphate reductoisomerase (396 aa).

Residues Thr15, Gly16, Ser17, Ile18, Gly41, and Asn130 each contribute to the NADPH site. Lys131 contacts 1-deoxy-D-xylulose 5-phosphate. Glu132 is an NADPH binding site. Mn(2+) is bound at residue Asp155. Residues Ser156, Glu157, Ser181, and His204 each coordinate 1-deoxy-D-xylulose 5-phosphate. Position 157 (Glu157) interacts with Mn(2+). Gly210 is an NADPH binding site. Residues Ser217, Asn222, Lys223, and Glu226 each contribute to the 1-deoxy-D-xylulose 5-phosphate site. Residue Glu226 coordinates Mn(2+).

This sequence belongs to the DXR family. Mg(2+) serves as cofactor. It depends on Mn(2+) as a cofactor.

The enzyme catalyses 2-C-methyl-D-erythritol 4-phosphate + NADP(+) = 1-deoxy-D-xylulose 5-phosphate + NADPH + H(+). The protein operates within isoprenoid biosynthesis; isopentenyl diphosphate biosynthesis via DXP pathway; isopentenyl diphosphate from 1-deoxy-D-xylulose 5-phosphate: step 1/6. Catalyzes the NADPH-dependent rearrangement and reduction of 1-deoxy-D-xylulose-5-phosphate (DXP) to 2-C-methyl-D-erythritol 4-phosphate (MEP). This Bifidobacterium longum subsp. infantis (strain ATCC 15697 / DSM 20088 / JCM 1222 / NCTC 11817 / S12) protein is 1-deoxy-D-xylulose 5-phosphate reductoisomerase.